Reading from the N-terminus, the 461-residue chain is B3 domain-containing protein REM9 (461 aa).

Positions 11 to 103 (NQHFFQPLLP…VFHVTALGPS (93 aa)) form a DNA-binding region, TF-B3 1. The disordered stretch occupies residues 110 to 146 (PQSSRHEEGEESGENEISEKEGEENVQKESDKSSSDL). Basic and acidic residues predominate over residues 126-143 (ISEKEGEENVQKESDKSS). DNA-binding regions (TF-B3) lie at residues 148–244 (CFSQ…CSRT) and 230–332 (LQKA…EQPS). Positions 333–415 (FKAEDGRHKR…SGIEGNLQHT (83 aa)) are disordered. Over residues 384 to 394 (PKVEIREKIAE) the composition is skewed to basic and acidic residues. Polar residues predominate over residues 400–415 (RASNKSSGIEGNLQHT).

The protein resides in the nucleus. This chain is B3 domain-containing protein REM9 (REM9), found in Arabidopsis thaliana (Mouse-ear cress).